A 156-amino-acid polypeptide reads, in one-letter code: Myosin regulatory light chain, striated adductor muscle (156 aa).

Ala1 bears the Blocked amino end (Ala) mark. 2 EF-hand domains span residues 15 to 50 (KQIQ…LGRT) and 84 to 119 (DSEE…MGDN). Residues Asp28, Asp30, Asp32, and Asp39 each contribute to the Ca(2+) site.

In molluscan muscle, calcium regulation is associated with myosin rather than with actin. Muscle myosin contains two types of light chains: the catalytic light chain, essential for ATPase activity, and the regulatory light chain, a calcium-binding protein responsible for Ca(2+) dependent binding and Ca(2+) dependent Mg-ATPase activity. This is Myosin regulatory light chain, striated adductor muscle from Chlamys nipponensis akazara (Akazara scallop).